We begin with the raw amino-acid sequence, 130 residues long: Small ribosomal subunit protein uS11 (130 aa).

Belongs to the universal ribosomal protein uS11 family. In terms of assembly, part of the 30S ribosomal subunit. Interacts with proteins S7 and S18. Binds to IF-3.

Its function is as follows. Located on the platform of the 30S subunit, it bridges several disparate RNA helices of the 16S rRNA. Forms part of the Shine-Dalgarno cleft in the 70S ribosome. The chain is Small ribosomal subunit protein uS11 from Gloeobacter violaceus (strain ATCC 29082 / PCC 7421).